The sequence spans 372 residues: Glutamate 5-kinase (372 aa).

Lys14 contributes to the ATP binding site. Residues Ser54, Asp141, and Asn153 each contribute to the substrate site. An ATP-binding site is contributed by 173 to 174 (TD). A PUA domain is found at 280 to 358 (RGTLVLDDGA…DAIESLLGYS (79 aa)).

This sequence belongs to the glutamate 5-kinase family.

The protein localises to the cytoplasm. The catalysed reaction is L-glutamate + ATP = L-glutamyl 5-phosphate + ADP. It participates in amino-acid biosynthesis; L-proline biosynthesis; L-glutamate 5-semialdehyde from L-glutamate: step 1/2. Catalyzes the transfer of a phosphate group to glutamate to form L-glutamate 5-phosphate. This Pseudomonas entomophila (strain L48) protein is Glutamate 5-kinase.